We begin with the raw amino-acid sequence, 243 residues long: 1-(5-phosphoribosyl)-5-[(5-phosphoribosylamino)methylideneamino] imidazole-4-carboxamide isomerase (243 aa).

The active-site Proton acceptor is aspartate 10. The active-site Proton donor is aspartate 129.

Belongs to the HisA/HisF family.

The protein resides in the cytoplasm. It carries out the reaction 1-(5-phospho-beta-D-ribosyl)-5-[(5-phospho-beta-D-ribosylamino)methylideneamino]imidazole-4-carboxamide = 5-[(5-phospho-1-deoxy-D-ribulos-1-ylimino)methylamino]-1-(5-phospho-beta-D-ribosyl)imidazole-4-carboxamide. It participates in amino-acid biosynthesis; L-histidine biosynthesis; L-histidine from 5-phospho-alpha-D-ribose 1-diphosphate: step 4/9. The polypeptide is 1-(5-phosphoribosyl)-5-[(5-phosphoribosylamino)methylideneamino] imidazole-4-carboxamide isomerase (Nocardia farcinica (strain IFM 10152)).